The chain runs to 176 residues: Ribosome maturation factor RimM (176 aa).

A PRC barrel domain is found at 101-173 (EGEYYHYRLI…RMVVDLPEGL (73 aa)).

This sequence belongs to the RimM family. In terms of assembly, binds ribosomal protein uS19.

It is found in the cytoplasm. Its function is as follows. An accessory protein needed during the final step in the assembly of 30S ribosomal subunit, possibly for assembly of the head region. Essential for efficient processing of 16S rRNA. May be needed both before and after RbfA during the maturation of 16S rRNA. It has affinity for free ribosomal 30S subunits but not for 70S ribosomes. The chain is Ribosome maturation factor RimM from Syntrophobacter fumaroxidans (strain DSM 10017 / MPOB).